A 363-amino-acid chain; its full sequence is NAD kinase 1 (363 aa).

The Proton acceptor role is filled by Asp-68. Residues 68 to 69 (DG), Arg-73, 175 to 176 (ND), Arg-186, Asp-205, Ala-240, and Gln-275 contribute to the NAD(+) site.

This sequence belongs to the NAD kinase family. The cofactor is a divalent metal cation.

Its subcellular location is the cytoplasm. It carries out the reaction NAD(+) + ATP = ADP + NADP(+) + H(+). Involved in the regulation of the intracellular balance of NAD and NADP, and is a key enzyme in the biosynthesis of NADP. Catalyzes specifically the phosphorylation on 2'-hydroxyl of the adenosine moiety of NAD to yield NADP. The chain is NAD kinase 1 from Streptomyces coelicolor (strain ATCC BAA-471 / A3(2) / M145).